Reading from the N-terminus, the 315-residue chain is Methionyl-tRNA formyltransferase (315 aa).

113 to 116 (SILP) lines the (6S)-5,6,7,8-tetrahydrofolate pocket.

The protein belongs to the Fmt family.

It carries out the reaction L-methionyl-tRNA(fMet) + (6R)-10-formyltetrahydrofolate = N-formyl-L-methionyl-tRNA(fMet) + (6S)-5,6,7,8-tetrahydrofolate + H(+). Its function is as follows. Attaches a formyl group to the free amino group of methionyl-tRNA(fMet). The formyl group appears to play a dual role in the initiator identity of N-formylmethionyl-tRNA by promoting its recognition by IF2 and preventing the misappropriation of this tRNA by the elongation apparatus. The sequence is that of Methionyl-tRNA formyltransferase from Vibrio parahaemolyticus serotype O3:K6 (strain RIMD 2210633).